We begin with the raw amino-acid sequence, 128 residues long: Small ribosomal subunit protein uS13 (128 aa).

Residues 97–128 (PVRGQRTRSNARTRKGPRPSRIKTKKKKEQTV) are disordered. Basic residues predominate over residues 101 to 128 (QRTRSNARTRKGPRPSRIKTKKKKEQTV).

Belongs to the universal ribosomal protein uS13 family. Part of the 30S ribosomal subunit. Forms a loose heterodimer with protein S19. Forms two bridges to the 50S subunit in the 70S ribosome.

Located at the top of the head of the 30S subunit, it contacts several helices of the 16S rRNA. In the 70S ribosome it contacts the 23S rRNA (bridge B1a) and protein L5 of the 50S subunit (bridge B1b), connecting the 2 subunits; these bridges are implicated in subunit movement. Contacts the tRNAs in the A and P-sites. The protein is Small ribosomal subunit protein uS13 of Pseudothermotoga lettingae (strain ATCC BAA-301 / DSM 14385 / NBRC 107922 / TMO) (Thermotoga lettingae).